A 364-amino-acid polypeptide reads, in one-letter code: MNNNTYHIAILPGDGIGPEIMQQAYKILNTVKNKFKINIITTEYKVGGNALDLEGSPLPKDTIKNCEKSNAILFGAVGGPKWNNINETSRPEFGALLTLRKHFNLFINLRPIYLPIELINLSPLKPEIISQGLDMICIRELIGGIYFGKPQGKSGIRSQEHAFDTAIYHRFEIERIAHFAFKLAQKRRKHVTSIDKANVLHTSMLWRKVVSEVASNYPNVHLQHLYVDNASMQLIRNPSAFDVILCPNLFGDILSDECAEINGSIGILPSASLNEHNFGLYEPAGGSAPDIAGKNIANPIAQILSTALLFRYSLKLNHVAITIEKAVYKALTLGYRTQDIAYNKQKSVNTDDMGDIIASLIYKL.

Residue Gly79–Glu92 coordinates NAD(+). Residues Arg100, Arg110, Arg139, and Asp228 each contribute to the substrate site. Residues Asp228, Asp252, and Asp256 each contribute to the Mg(2+) site. Gly286–Asn298 serves as a coordination point for NAD(+).

Belongs to the isocitrate and isopropylmalate dehydrogenases family. LeuB type 1 subfamily. Homodimer. The cofactor is Mg(2+). Mn(2+) is required as a cofactor.

It localises to the cytoplasm. It carries out the reaction (2R,3S)-3-isopropylmalate + NAD(+) = 4-methyl-2-oxopentanoate + CO2 + NADH. It participates in amino-acid biosynthesis; L-leucine biosynthesis; L-leucine from 3-methyl-2-oxobutanoate: step 3/4. In terms of biological role, catalyzes the oxidation of 3-carboxy-2-hydroxy-4-methylpentanoate (3-isopropylmalate) to 3-carboxy-4-methyl-2-oxopentanoate. The product decarboxylates to 4-methyl-2 oxopentanoate. The polypeptide is 3-isopropylmalate dehydrogenase (Blochmanniella floridana).